Here is a 618-residue protein sequence, read N- to C-terminus: DNA mismatch repair protein MutL (618 aa).

This sequence belongs to the DNA mismatch repair MutL/HexB family.

In terms of biological role, this protein is involved in the repair of mismatches in DNA. It is required for dam-dependent methyl-directed DNA mismatch repair. May act as a 'molecular matchmaker', a protein that promotes the formation of a stable complex between two or more DNA-binding proteins in an ATP-dependent manner without itself being part of a final effector complex. The sequence is that of DNA mismatch repair protein MutL from Bradyrhizobium sp. (strain BTAi1 / ATCC BAA-1182).